Reading from the N-terminus, the 329-residue chain is Cathepsin K (329 aa).

Residues 1–15 (MWVFKFLLLPVVSFA) form the signal peptide. Positions 16-114 (LSPEETLDTQ…TLYTPEWEGR (99 aa)) are cleaved as a propeptide — activation peptide. Asparagine 103 is a glycosylation site (N-linked (GlcNAc...) asparagine). 2 disulfides stabilise this stretch: cysteine 136–cysteine 177 and cysteine 170–cysteine 210. Cysteine 139 is a catalytic residue. Asparagine 213 carries N-linked (GlcNAc...) asparagine glycosylation. Cysteines 269 and 318 form a disulfide. Residues histidine 276 and asparagine 296 contribute to the active site.

It belongs to the peptidase C1 family.

It is found in the lysosome. The protein localises to the secreted. The protein resides in the apical cell membrane. The enzyme catalyses Broad proteolytic activity. With small-molecule substrates and inhibitors, the major determinant of specificity is P2, which is preferably Leu, Met &gt; Phe, and not Arg.. Functionally, thiol protease involved in osteoclastic bone resorption and may participate partially in the disorder of bone remodeling. Displays potent endoprotease activity against fibrinogen at acid pH. May play an important role in extracellular matrix degradation. Involved in the release of thyroid hormone thyroxine (T4) by limited proteolysis of TG/thyroglobulin in the thyroid follicle lumen. This chain is Cathepsin K (Ctsk), found in Rattus norvegicus (Rat).